The chain runs to 495 residues: WD repeat-containing protein 37 (495 aa).

Polar residues-rich tracts occupy residues 1–13 and 22–31; these read MPTE…TARQ and SLSIRRTNSS. Residues 1–50 form a disordered region; the sequence is MPTESASCSTARQTKQKRKSHSLSIRRTNSSEQERTGLPRDMLEGQDSKL. Basic and acidic residues predominate over residues 32–47; it reads EQERTGLPRDMLEGQD. WD repeat units lie at residues 154–194 and 197–236; these read GHRD…CLVK and GHVG…PTPQ. Positions 237-266 are disordered; the sequence is PVADTSQISGEDEVECSDKDEPDLDGDVSS. A compositionally biased stretch (acidic residues) spans 246 to 264; it reads GEDEVECSDKDEPDLDGDV. 5 WD repeats span residues 280–319, 322–361, 366–404, 407–446, and 453–494; these read SHQG…LVHS, GHDQ…IHSV, GHTD…SPIA, RTDS…LARL, and GHRR…LLQE.

Forms homodimers. Interacts with PACS1. Interacts with PACS2.

Its subcellular location is the cytoplasm. It localises to the nucleus. Functionally, required for normal ER Ca2+ handling in lymphocytes. Together with PACS1, it plays an essential role in stabilizing peripheral lymphocyte populations. In Pongo abelii (Sumatran orangutan), this protein is WD repeat-containing protein 37 (WDR37).